The following is a 188-amino-acid chain: dCTP deaminase (188 aa).

DCTP is bound by residues 111–116 (KSTYAR), 135–137 (TLE), glutamine 156, tyrosine 170, and glutamine 180. Catalysis depends on glutamate 137, which acts as the Proton donor/acceptor.

This sequence belongs to the dCTP deaminase family. Homotrimer.

It carries out the reaction dCTP + H2O + H(+) = dUTP + NH4(+). Its pathway is pyrimidine metabolism; dUMP biosynthesis; dUMP from dCTP (dUTP route): step 1/2. In terms of biological role, catalyzes the deamination of dCTP to dUTP. The sequence is that of dCTP deaminase from Aromatoleum aromaticum (strain DSM 19018 / LMG 30748 / EbN1) (Azoarcus sp. (strain EbN1)).